The chain runs to 688 residues: Elongation factor G (688 aa).

The region spanning 6-280 is the tr-type G domain; the sequence is KLFRNFGIMA…AVVDFLPSPI (275 aa). Residues 15–22, 79–83, and 133–136 contribute to the GTP site; these read AHIDAGKT, DTPGH, and NKMD.

Belongs to the TRAFAC class translation factor GTPase superfamily. Classic translation factor GTPase family. EF-G/EF-2 subfamily.

Its subcellular location is the cytoplasm. Its function is as follows. Catalyzes the GTP-dependent ribosomal translocation step during translation elongation. During this step, the ribosome changes from the pre-translocational (PRE) to the post-translocational (POST) state as the newly formed A-site-bound peptidyl-tRNA and P-site-bound deacylated tRNA move to the P and E sites, respectively. Catalyzes the coordinated movement of the two tRNA molecules, the mRNA and conformational changes in the ribosome. The polypeptide is Elongation factor G (Ureaplasma urealyticum serovar 10 (strain ATCC 33699 / Western)).